The sequence spans 373 residues: Chaperone protein DnaJ (373 aa).

A J domain is found at 4–68; the sequence is NYYQILGVSK…QKRAAYDRLG (65 aa). The CR-type zinc finger occupies 136 to 214; it reads GIEKNISFSS…CHGMGRYHKQ (79 aa). Zn(2+)-binding residues include Cys149, Cys152, Cys166, Cys169, Cys188, Cys191, Cys202, and Cys205. CXXCXGXG motif repeat units follow at residues 149–156, 166–173, 188–195, and 202–209; these read CDTCHGSG, CDACSGVG, CHKCQGNG, and CKKCHGMG.

This sequence belongs to the DnaJ family. As to quaternary structure, homodimer. Zn(2+) is required as a cofactor.

It localises to the cytoplasm. In terms of biological role, participates actively in the response to hyperosmotic and heat shock by preventing the aggregation of stress-denatured proteins and by disaggregating proteins, also in an autonomous, DnaK-independent fashion. Unfolded proteins bind initially to DnaJ; upon interaction with the DnaJ-bound protein, DnaK hydrolyzes its bound ATP, resulting in the formation of a stable complex. GrpE releases ADP from DnaK; ATP binding to DnaK triggers the release of the substrate protein, thus completing the reaction cycle. Several rounds of ATP-dependent interactions between DnaJ, DnaK and GrpE are required for fully efficient folding. Also involved, together with DnaK and GrpE, in the DNA replication of plasmids through activation of initiation proteins. The sequence is that of Chaperone protein DnaJ from Rickettsia africae (strain ESF-5).